Here is a 145-residue protein sequence, read N- to C-terminus: 3-dehydroquinate dehydratase (145 aa).

The active-site Proton acceptor is Y22. 3 residues coordinate substrate: N71, H77, and D84. Catalysis depends on H97, which acts as the Proton donor. Residues 98 to 99 and R108 each bind substrate; that span reads LS.

Belongs to the type-II 3-dehydroquinase family. In terms of assembly, homododecamer.

It catalyses the reaction 3-dehydroquinate = 3-dehydroshikimate + H2O. It participates in metabolic intermediate biosynthesis; chorismate biosynthesis; chorismate from D-erythrose 4-phosphate and phosphoenolpyruvate: step 3/7. In terms of biological role, catalyzes a trans-dehydration via an enolate intermediate. In Francisella philomiragia subsp. philomiragia (strain ATCC 25017 / CCUG 19701 / FSC 153 / O#319-036), this protein is 3-dehydroquinate dehydratase.